A 365-amino-acid polypeptide reads, in one-letter code: tRNA/tmRNA (uracil-C(5))-methyltransferase (365 aa).

Residues Gln-196, Tyr-224, Asn-229, Glu-245, and Asp-298 each coordinate S-adenosyl-L-methionine. Catalysis depends on Cys-323, which acts as the Nucleophile. Catalysis depends on Glu-357, which acts as the Proton acceptor.

This sequence belongs to the class I-like SAM-binding methyltransferase superfamily. RNA M5U methyltransferase family. TrmA subfamily.

It catalyses the reaction uridine(54) in tRNA + S-adenosyl-L-methionine = 5-methyluridine(54) in tRNA + S-adenosyl-L-homocysteine + H(+). The enzyme catalyses uridine(341) in tmRNA + S-adenosyl-L-methionine = 5-methyluridine(341) in tmRNA + S-adenosyl-L-homocysteine + H(+). Functionally, dual-specificity methyltransferase that catalyzes the formation of 5-methyluridine at position 54 (m5U54) in all tRNAs, and that of position 341 (m5U341) in tmRNA (transfer-mRNA). The sequence is that of tRNA/tmRNA (uracil-C(5))-methyltransferase from Nautilia profundicola (strain ATCC BAA-1463 / DSM 18972 / AmH).